The primary structure comprises 476 residues: Ribulose bisphosphate carboxylase large chain (476 aa).

A propeptide spanning residues 1–2 (MS) is cleaved from the precursor. P3 is modified (N-acetylproline). K14 carries the N6,N6,N6-trimethyllysine modification. Positions 123 and 173 each coordinate substrate. The active-site Proton acceptor is the K175. Residue K177 coordinates substrate. 3 residues coordinate Mg(2+): K201, D203, and E204. Residue K201 is modified to N6-carboxylysine. Substrate contacts are provided by R295, H327, and S379.

It belongs to the RuBisCO large chain family. Type I subfamily. As to quaternary structure, heterohexadecamer of 8 large chains and 8 small chains; disulfide-linked. The disulfide link is formed within the large subunit homodimers. Mg(2+) serves as cofactor. In terms of processing, the disulfide bond which can form in the large chain dimeric partners within the hexadecamer appears to be associated with oxidative stress and protein turnover.

It is found in the plastid. Its subcellular location is the chloroplast. It catalyses the reaction 2 (2R)-3-phosphoglycerate + 2 H(+) = D-ribulose 1,5-bisphosphate + CO2 + H2O. The catalysed reaction is D-ribulose 1,5-bisphosphate + O2 = 2-phosphoglycolate + (2R)-3-phosphoglycerate + 2 H(+). Its function is as follows. RuBisCO catalyzes two reactions: the carboxylation of D-ribulose 1,5-bisphosphate, the primary event in carbon dioxide fixation, as well as the oxidative fragmentation of the pentose substrate in the photorespiration process. Both reactions occur simultaneously and in competition at the same active site. The protein is Ribulose bisphosphate carboxylase large chain of Barnadesia caryophylla (Xenophontia caryophylla).